A 427-amino-acid chain; its full sequence is Putative F-box protein At3g44060 (427 aa).

The F-box domain occupies 1-46; it reads MDCLPDDLLVQILYLLPTKEAVSTSVLSKRWRTLFTRSDNLDFHDP.

The polypeptide is Putative F-box protein At3g44060 (Arabidopsis thaliana (Mouse-ear cress)).